A 345-amino-acid polypeptide reads, in one-letter code: Platelet-derived growth factor C (345 aa).

An N-terminal signal peptide occupies residues 1 to 22; the sequence is MLLLGLLLLTSALAGQRTGTRA. The span at 24-33 shows a compositional bias: polar residues; that stretch reads SNLSSKLQLS. Residues 24-45 are disordered; it reads SNLSSKLQLSSDKEQNGVQDPR. The N-linked (GlcNAc...) asparagine glycan is linked to Asn25. Positions 34-45 are enriched in basic and acidic residues; that stretch reads SDKEQNGVQDPR. Residues 46–163 enclose the CUB domain; that stretch reads HERVVTISGN…PGFCIHYSII (118 aa). N-linked (GlcNAc...) asparagine glycosylation is present at Asn55. 4 disulfide bridges follow: Cys104–Cys124, Cys250–Cys294, Cys280–Cys335, and Cys287–Cys337.

This sequence belongs to the PDGF/VEGF growth factor family. As to quaternary structure, homodimer; disulfide-linked. Interacts with PDGFRA homodimers, and with heterodimers formed by PDGFRA and PDGFRB. Interacts (via CUB domain) with PLAT (via kringle domain). In terms of processing, proteolytic removal of the N-terminal CUB domain releasing the core domain is necessary for unmasking the receptor-binding epitopes of the core domain. Cleavage after basic residues in the hinge region (region connecting the CUB and growth factor domains) gives rise to the receptor-binding form. Cleaved by PLAT and PLG. Sumoylated by SUMO1. Post-translationally, N-glycosylated. In terms of tissue distribution, mainly expressed in kidney, testis, liver, heart and brain (at protein level). Highly expressed in airway epithelium, interstitial cells and alveolar macrophages in the lung of mice overexpressing IL13. Expressed in the ovaries.

It is found in the cytoplasm. It localises to the cytosol. Its subcellular location is the secreted. The protein resides in the nucleus. The protein localises to the cytoplasmic granule. It is found in the cell membrane. Growth factor that plays an essential role in the regulation of embryonic development, cell proliferation, cell migration, survival and chemotaxis. Potent mitogen and chemoattractant for cells of mesenchymal origin. Required for normal skeleton formation during embryonic development, especially for normal development of the craniofacial skeleton and for normal development of the palate. Required for normal skin morphogenesis during embryonic development. Plays an important role in wound healing, where it appears to be involved in three stages: inflammation, proliferation and remodeling. Plays an important role in angiogenesis and blood vessel development. Involved in fibrotic processes, in which transformation of interstitial fibroblasts into myofibroblasts plus collagen deposition occurs. The CUB domain has mitogenic activity in coronary artery smooth muscle cells, suggesting a role beyond the maintenance of the latency of the PDGF domain. In the nucleus, PDGFC seems to have additional function. The sequence is that of Platelet-derived growth factor C (Pdgfc) from Mus musculus (Mouse).